The sequence spans 114 residues: T cell receptor beta variable 19 (114 aa).

The signal sequence occupies residues M1–G21. Residues G22–I114 form the Ig-like domain. N37 carries an N-linked (GlcNAc...) asparagine glycan. The cysteines at positions 42 and 110 are disulfide-linked.

As to quaternary structure, alpha-beta TR is a heterodimer composed of an alpha and beta chain; disulfide-linked. The alpha-beta TR is associated with the transmembrane signaling CD3 coreceptor proteins to form the TR-CD3 (TcR or TCR). The assembly of alpha-beta TR heterodimers with CD3 occurs in the endoplasmic reticulum where a single alpha-beta TR heterodimer associates with one CD3D-CD3E heterodimer, one CD3G-CD3E heterodimer and one CD247 homodimer forming a stable octameric structure. CD3D-CD3E and CD3G-CD3E heterodimers preferentially associate with TR alpha and TR beta chains, respectively. The association of the CD247 homodimer is the last step of TcR assembly in the endoplasmic reticulum and is required for transport to the cell surface. (Microbial infection) Interacts with Staphylococcus aureus enterotoxin type B/SEB.

Its subcellular location is the cell membrane. Its function is as follows. V region of the variable domain of T cell receptor (TR) beta chain that participates in the antigen recognition. Alpha-beta T cell receptors are antigen specific receptors which are essential to the immune response and are present on the cell surface of T lymphocytes. Recognize peptide-major histocompatibility (MH) (pMH) complexes that are displayed by antigen presenting cells (APC), a prerequisite for efficient T cell adaptive immunity against pathogens. Binding of alpha-beta TR to pMH complex initiates TR-CD3 clustering on the cell surface and intracellular activation of LCK that phosphorylates the ITAM motifs of CD3G, CD3D, CD3E and CD247 enabling the recruitment of ZAP70. In turn ZAP70 phosphorylates LAT, which recruits numerous signaling molecules to form the LAT signalosome. The LAT signalosome propagates signal branching to three major signaling pathways, the calcium, the mitogen-activated protein kinase (MAPK) kinase and the nuclear factor NF-kappa-B (NF-kB) pathways, leading to the mobilization of transcription factors that are critical for gene expression and essential for T cell growth and differentiation. The T cell repertoire is generated in the thymus, by V-(D)-J rearrangement. This repertoire is then shaped by intrathymic selection events to generate a peripheral T cell pool of self-MH restricted, non-autoaggressive T cells. Post-thymic interaction of alpha-beta TR with the pMH complexes shapes TR structural and functional avidity. The polypeptide is T cell receptor beta variable 19 (Homo sapiens (Human)).